A 148-amino-acid polypeptide reads, in one-letter code: Snaclec 6 (148 aa).

Positions 1 to 23 (MGRFIFVSFGLLVMFLSLSGTEA) are cleaved as a signal peptide. 3 cysteine pairs are disulfide-bonded: Cys27/Cys38, Cys55/Cys144, and Cys121/Cys136. In terms of domain architecture, C-type lectin spans 34-145 (YDQNCYKAFE…CSGTHNFVCK (112 aa)). Asn130 carries N-linked (GlcNAc...) asparagine glycosylation.

The protein belongs to the snaclec family. As to quaternary structure, heterodimer; disulfide-linked. As to expression, expressed by the venom gland.

It is found in the secreted. Functionally, interferes with one step of hemostasis (modulation of platelet aggregation, or coagulation cascade, for example). The chain is Snaclec 6 from Bitis arietans (African puff adder).